Here is a 105-residue protein sequence, read N- to C-terminus: Nucleoid-associated protein RPC_4847 (105 aa).

The protein belongs to the YbaB/EbfC family. As to quaternary structure, homodimer.

The protein localises to the cytoplasm. The protein resides in the nucleoid. Its function is as follows. Binds to DNA and alters its conformation. May be involved in regulation of gene expression, nucleoid organization and DNA protection. In Rhodopseudomonas palustris (strain BisB18), this protein is Nucleoid-associated protein RPC_4847.